The following is a 77-amino-acid chain: Sec-independent protein translocase protein TatA (77 aa).

The chain crosses the membrane as a helical span at residues 1 to 21 (MGSFSIWHWLIVLVIVMLVFG). A disordered region spans residues 46–77 (GEGKAAADPAQSKELRDSTTIDVEAKEKTRQQ).

Belongs to the TatA/E family. In terms of assembly, the Tat system comprises two distinct complexes: a TatABC complex, containing multiple copies of TatA, TatB and TatC subunits, and a separate TatA complex, containing only TatA subunits. Substrates initially bind to the TatABC complex, which probably triggers association of the separate TatA complex to form the active translocon.

The protein resides in the cell inner membrane. Part of the twin-arginine translocation (Tat) system that transports large folded proteins containing a characteristic twin-arginine motif in their signal peptide across membranes. TatA could form the protein-conducting channel of the Tat system. The sequence is that of Sec-independent protein translocase protein TatA from Cupriavidus necator (strain ATCC 17699 / DSM 428 / KCTC 22496 / NCIMB 10442 / H16 / Stanier 337) (Ralstonia eutropha).